Reading from the N-terminus, the 119-residue chain is Small ribosomal subunit protein uS13 (119 aa).

The interval 96-119 is disordered; the sequence is PVRGQRTKTNARTRKGPRKLIKSR.

It belongs to the universal ribosomal protein uS13 family. In terms of assembly, part of the 30S ribosomal subunit. Forms a loose heterodimer with protein S19. Forms two bridges to the 50S subunit in the 70S ribosome.

Located at the top of the head of the 30S subunit, it contacts several helices of the 16S rRNA. In the 70S ribosome it contacts the 23S rRNA (bridge B1a) and protein L5 of the 50S subunit (bridge B1b), connecting the 2 subunits; these bridges are implicated in subunit movement. Contacts the tRNAs in the A and P-sites. The chain is Small ribosomal subunit protein uS13 from Buchnera aphidicola subsp. Cinara cedri (strain Cc).